Here is a 105-residue protein sequence, read N- to C-terminus: Large ribosomal subunit protein eL36 (105 aa).

A disordered region spans residues 1-20; the sequence is MAKEAPAKTGLAVGLNKGHK.

Belongs to the eukaryotic ribosomal protein eL36 family.

The protein is Large ribosomal subunit protein eL36 (rpl36) of Trichoderma hamatum.